Here is a 204-residue protein sequence, read N- to C-terminus: WW domain-containing protein C11B10.08 (204 aa).

The WW domain maps to 7-43 (EGLPNGWVAQWDERYKCYFYVNESDPKAKPQWECPVR). The disordered stretch occupies residues 32–117 (PKAKPQWECP…GYPQQPYYYP (86 aa)). Composition is skewed to low complexity over residues 66–100 (YSNSAAPATPAASASSAAPAPAPAASQNRAYGAAP) and 108–117 (GYPQQPYYYP).

The protein localises to the cytoplasm. The protein resides in the nucleus. The chain is WW domain-containing protein C11B10.08 from Schizosaccharomyces pombe (strain 972 / ATCC 24843) (Fission yeast).